Reading from the N-terminus, the 421-residue chain is MAPQMEKVSEELILPSSPTPQSLKCYKISHLDQLLLTCHIPFILFYPNPLDSNLDPAQTSQHLKQSLSKVLTHFYPLAGRINVNSSVDCNDSGVPFVEARVQAQLSQAIQNVVELEKLDQYLPSAAYPGGKIEVNEDVPLAVKISFFECGGTAIGVNLSHKIADVLSLATFLNAWTATCRGETEIVLPNFDLAARHFPPVDNTPSPELVPDENVVMKRFVFDKEKIGALRAQASSASEEKNFSRVQLVVAYIWKHVIDVTRAKYGAKNKFVVVQAVNLRSRMNPPLPHYAMGNIATLLFAAVDAEWDKDFPDLIGPLRTSLEKTEDDHNHELLKGMTCLYELEPQELLSFTSWCRLGFYDLDFGWGKPLSACTTTFPKRNAALLMDTRSGDGVEAWLPMAEDEMAMLPVELLSLVDSDFSK.

Catalysis depends on proton acceptor residues His-160 and Asp-362.

This sequence belongs to the plant acyltransferase family. In terms of assembly, monomer. Mainly expressed in roots and, to a lower level, in leaves.

The catalysed reaction is 16-epivellosimine + acetyl-CoA = vinorine + CoA. Its pathway is alkaloid biosynthesis; ajmaline biosynthesis. Its activity is regulated as follows. Complete inhibition by 4-(2-aminoethyl)-benzenesulfonyl fluoride (AEBSF), N-tosyl-L-phenylalanine chloromethylketone (TPCK), Hg(2+) and diethyl-pyrocarbonate (DEPC). 50% inhibition by N-(N-(L-3-trans-carboxirane-2-carbonyl)-L-leucyl)-agmanitine (E-64), N-alpha-p-tosyl-L-lysine chloromethylketone (TLCK) and phenylmethylsulfonyl fluoride (PMSF). In terms of biological role, acetyltransferase involved in the biosynthesis of ajmaline-type monoterpenoid indole alkaloids (MIAs) natural products, important plant-derived pharmaceuticals used in the therapy of heart disorders. Catalyzes the conversion of 16-epivellosimine to vinorine, precursor of vomilenine, an intermediate chemical in the biosynthesis of ajmaline. Acts on gardneral, but not on polyneuridine aldehyde or N-methylgardneral. This is Vinorine synthase from Rauvolfia serpentina (Serpentine wood).